The primary structure comprises 116 residues: Methionine-R-sulfoxide reductase B1 (116 aa).

Residues 1-106 (MSFCSFFGGE…FSSSLKFVPK (106 aa)) enclose the MsrB domain. Zn(2+) contacts are provided by Cys-23, Cys-26, Cys-71, and Cys-74. Sec-95 functions as the Nucleophile in the catalytic mechanism. Position 95 (Sec-95) is a non-standard amino acid, selenocysteine.

The protein belongs to the MsrB Met sulfoxide reductase family. Zn(2+) is required as a cofactor. Truncated MSRB1/SEPX1 proteins produced by failed UGA/Sec decoding are ubiquitinated by the CRL2(FEM1C) E3 ubiquitin-protein ligase complex.

It localises to the cytoplasm. The protein localises to the nucleus. It is found in the cytoskeleton. The catalysed reaction is L-methionyl-[protein] + [thioredoxin]-disulfide + H2O = L-methionyl-(R)-S-oxide-[protein] + [thioredoxin]-dithiol. It carries out the reaction [thioredoxin]-disulfide + L-methionine + H2O = L-methionine (R)-S-oxide + [thioredoxin]-dithiol. Its function is as follows. Methionine-sulfoxide reductase that specifically reduces methionine (R)-sulfoxide back to methionine. While in many cases, methionine oxidation is the result of random oxidation following oxidative stress, methionine oxidation is also a post-translational modification that takes place on specific residue. Acts as a regulator of actin assembly by reducing methionine (R)-sulfoxide mediated by MICALs (MICAL1, MICAL2 or MICAL3) on actin, thereby promoting filament repolymerization. Plays a role in innate immunity by reducing oxidized actin, leading to actin repolymerization in macrophages. The protein is Methionine-R-sulfoxide reductase B1 (Msrb1) of Mus musculus (Mouse).